The primary structure comprises 299 residues: Farnesyl diphosphate synthase (299 aa).

Lys-45, Arg-48, and His-77 together coordinate isopentenyl diphosphate. Mg(2+) is bound by residues Asp-84 and Asp-90. Arg-95 lines the (2E)-geranyl diphosphate pocket. Position 96 (Arg-96) interacts with isopentenyl diphosphate. Residues Lys-181, Thr-182, Gln-220, and Lys-237 each coordinate (2E)-geranyl diphosphate.

The protein belongs to the FPP/GGPP synthase family. The cofactor is Mg(2+).

It localises to the cytoplasm. It carries out the reaction isopentenyl diphosphate + (2E)-geranyl diphosphate = (2E,6E)-farnesyl diphosphate + diphosphate. The chain is Farnesyl diphosphate synthase (ispA) from Escherichia coli (strain K12).